The primary structure comprises 188 residues: dCTP deaminase (188 aa).

DCTP contacts are provided by residues 111-116, 135-137, Q156, Y170, K179, and Q180; these read KSTYAR and TLE. Catalysis depends on E137, which acts as the Proton donor/acceptor.

This sequence belongs to the dCTP deaminase family. In terms of assembly, homotrimer.

The enzyme catalyses dCTP + H2O + H(+) = dUTP + NH4(+). It participates in pyrimidine metabolism; dUMP biosynthesis; dUMP from dCTP (dUTP route): step 1/2. Its function is as follows. Catalyzes the deamination of dCTP to dUTP. In Rickettsia typhi (strain ATCC VR-144 / Wilmington), this protein is dCTP deaminase.